Here is a 69-residue protein sequence, read N- to C-terminus: Sec-independent protein translocase protein TatA (69 aa).

Residues 1–21 (MFPKLGMGELVVILLIVVILF) form a helical membrane-spanning segment. The interval 43–69 (SFSGEDEEKPSTPGATSSDEASKAKQA) is disordered.

Belongs to the TatA/E family. In terms of assembly, the Tat system comprises two distinct complexes: a TatABC complex, containing multiple copies of TatA, TatB and TatC subunits, and a separate TatA complex, containing only TatA subunits. Substrates initially bind to the TatABC complex, which probably triggers association of the separate TatA complex to form the active translocon.

It localises to the cell inner membrane. Functionally, part of the twin-arginine translocation (Tat) system that transports large folded proteins containing a characteristic twin-arginine motif in their signal peptide across membranes. TatA could form the protein-conducting channel of the Tat system. The polypeptide is Sec-independent protein translocase protein TatA (Anaeromyxobacter sp. (strain Fw109-5)).